The primary structure comprises 615 residues: Zinc metalloproteinase-disintegrin-like (615 aa).

The signal sequence occupies residues M1–S20. The propeptide occupies I21 to P195. The 197-residue stretch at K204–P400 folds into the Peptidase M12B domain. Cystine bridges form between C315–C395, C355–C379, and C357–C362. H340 serves as a coordination point for Zn(2+). Residue E341 is part of the active site. 2 residues coordinate Zn(2+): H344 and H350. The Disintegrin domain maps to P408 to N494. 5 residues coordinate Ca(2+): V410, N413, F415, E417, and D423. Intrachain disulfides connect C411/C440, C422/C435, C424/C430, C434/C457, C448/C454, C453/C479, C466/C486, C473/C505, C498/C510, C517/C567, C532/C576, C545/C555, C562/C602, and C596/C608. Positions D472–D474 match the D/ECD-tripeptide motif.

This sequence belongs to the venom metalloproteinase (M12B) family. P-III subfamily. P-IIIa sub-subfamily. In terms of assembly, monomer. Zn(2+) is required as a cofactor. Expressed by the venom gland.

It localises to the secreted. Snake venom zinc metalloprotease that may induce platelet aggregation. The protein is Zinc metalloproteinase-disintegrin-like of Cerberus rynchops (Dog-faced water snake).